Reading from the N-terminus, the 103-residue chain is Small ribosomal subunit protein uS10 (103 aa).

The protein belongs to the universal ribosomal protein uS10 family. In terms of assembly, part of the 30S ribosomal subunit.

Functionally, involved in the binding of tRNA to the ribosomes. In Acinetobacter baumannii (strain AB307-0294), this protein is Small ribosomal subunit protein uS10.